Here is a 288-residue protein sequence, read N- to C-terminus: tRNA dimethylallyltransferase (288 aa).

An ATP-binding site is contributed by 2–9 (GPTAAGKS). Residue 4-9 (TAAGKS) participates in substrate binding. Residues 27–30 (DSMQ) are interaction with substrate tRNA.

It belongs to the IPP transferase family. As to quaternary structure, monomer. It depends on Mg(2+) as a cofactor.

It carries out the reaction adenosine(37) in tRNA + dimethylallyl diphosphate = N(6)-dimethylallyladenosine(37) in tRNA + diphosphate. Catalyzes the transfer of a dimethylallyl group onto the adenine at position 37 in tRNAs that read codons beginning with uridine, leading to the formation of N6-(dimethylallyl)adenosine (i(6)A). This chain is tRNA dimethylallyltransferase, found in Frankia alni (strain DSM 45986 / CECT 9034 / ACN14a).